Reading from the N-terminus, the 348-residue chain is Lipoyl synthase (348 aa).

A disordered region spans residues 1 to 45; sequence MSESAKPRITSGSKFRNEHGFSAIKDGVKRSSSNTEGKSLERKPK. [4Fe-4S] cluster-binding residues include Cys73, Cys78, Cys84, Cys99, Cys103, Cys106, and Ser314. The region spanning 85 to 303 is the Radical SAM core domain; it reads WTNGTATIMV…RDIGLEKGFM (219 aa).

This sequence belongs to the radical SAM superfamily. Lipoyl synthase family. Requires [4Fe-4S] cluster as cofactor.

It localises to the cytoplasm. It catalyses the reaction [[Fe-S] cluster scaffold protein carrying a second [4Fe-4S](2+) cluster] + N(6)-octanoyl-L-lysyl-[protein] + 2 oxidized [2Fe-2S]-[ferredoxin] + 2 S-adenosyl-L-methionine + 4 H(+) = [[Fe-S] cluster scaffold protein] + N(6)-[(R)-dihydrolipoyl]-L-lysyl-[protein] + 4 Fe(3+) + 2 hydrogen sulfide + 2 5'-deoxyadenosine + 2 L-methionine + 2 reduced [2Fe-2S]-[ferredoxin]. It participates in protein modification; protein lipoylation via endogenous pathway; protein N(6)-(lipoyl)lysine from octanoyl-[acyl-carrier-protein]: step 2/2. Its function is as follows. Catalyzes the radical-mediated insertion of two sulfur atoms into the C-6 and C-8 positions of the octanoyl moiety bound to the lipoyl domains of lipoate-dependent enzymes, thereby converting the octanoylated domains into lipoylated derivatives. The sequence is that of Lipoyl synthase from Marinobacter nauticus (strain ATCC 700491 / DSM 11845 / VT8) (Marinobacter aquaeolei).